The sequence spans 106 residues: Nucleoid-associated protein Noc_2594 (106 aa).

2 disordered regions span residues 1–20 (MKGG…SNME) and 85–106 (QSKE…KLPL). Residues 10 to 20 (KQAQQLQSNME) are compositionally biased toward polar residues.

This sequence belongs to the YbaB/EbfC family. Homodimer.

Its subcellular location is the cytoplasm. It localises to the nucleoid. Its function is as follows. Binds to DNA and alters its conformation. May be involved in regulation of gene expression, nucleoid organization and DNA protection. This is Nucleoid-associated protein Noc_2594 from Nitrosococcus oceani (strain ATCC 19707 / BCRC 17464 / JCM 30415 / NCIMB 11848 / C-107).